A 236-amino-acid polypeptide reads, in one-letter code: uncharacterized protein (236 aa).

A helical transmembrane segment spans residues 15–34 (GGMAHIISEAVIAGSIGLYF). The stretch at 36–71 (KKISALEQTVQELQSQLEVQNNQLQWLIQQQTRRLA) forms a coiled coil. 2 disordered regions span residues 83–113 (SPLPPQRDYRQQSTTTNAAGNNGAYPSFQFK) and 185–236 (ATTQ…IDCE). Composition is skewed to polar residues over residues 93 to 102 (QQSTTTNAAG) and 185 to 195 (ATTQVSTFSKP). A compositionally biased stretch (basic and acidic residues) spans 225–236 (ALDKILNDIDCE).

It localises to the membrane. This is an uncharacterized protein from Aedes vexans (Inland floodwater mosquito).